A 179-amino-acid chain; its full sequence is Large ribosomal subunit protein uL16m (179 aa).

Belongs to the universal ribosomal protein uL16 family. As to quaternary structure, component of the mitochondrial ribosome large subunit.

Its subcellular location is the mitochondrion. In Arabidopsis thaliana (Mouse-ear cress), this protein is Large ribosomal subunit protein uL16m (RPL16).